A 134-amino-acid chain; its full sequence is MSWQTYVDDHLMADIEGQQGHHLAAAAILGHDGSVWAQSSTFPKFKPEEITNIMKDFDEPGHLAPTGLFLGGAKYMVIQGEPGAVIRGKKGSGGITIKKTNQALIFGIYEEPVTPGQCNMVVEKIRDYLVDQGY.

Belongs to the profilin family. Occurs in many kinds of cells as a complex with monomeric actin in a 1:1 ratio.

It localises to the cytoplasm. The protein resides in the cytoskeleton. In terms of biological role, binds to actin and affects the structure of the cytoskeleton. At high concentrations, profilin prevents the polymerization of actin, whereas it enhances it at low concentrations. By binding to PIP2, it inhibits the formation of IP3 and DG. The sequence is that of Profilin-1 (PRO1) from Nicotiana tabacum (Common tobacco).